The following is an 80-amino-acid chain: Small ribosomal subunit protein uS17 (80 aa).

The protein belongs to the universal ribosomal protein uS17 family. As to quaternary structure, part of the 30S ribosomal subunit.

In terms of biological role, one of the primary rRNA binding proteins, it binds specifically to the 5'-end of 16S ribosomal RNA. This chain is Small ribosomal subunit protein uS17, found in Brucella anthropi (strain ATCC 49188 / DSM 6882 / CCUG 24695 / JCM 21032 / LMG 3331 / NBRC 15819 / NCTC 12168 / Alc 37) (Ochrobactrum anthropi).